Consider the following 145-residue polypeptide: Bacilliredoxin Acid345_1880 (145 aa).

The protein belongs to the bacilliredoxin family.

The polypeptide is Bacilliredoxin Acid345_1880 (Koribacter versatilis (strain Ellin345)).